The following is a 366-amino-acid chain: UDP-N-acetylenolpyruvoylglucosamine reductase (366 aa).

The region spanning 27-197 (LGGPAAGFVV…LRVRFLLRDG (171 aa)) is the FAD-binding PCMH-type domain. Residue arginine 175 is part of the active site. The active-site Proton donor is the serine 252. Glutamate 358 is an active-site residue.

The protein belongs to the MurB family. FAD serves as cofactor.

It localises to the cytoplasm. It carries out the reaction UDP-N-acetyl-alpha-D-muramate + NADP(+) = UDP-N-acetyl-3-O-(1-carboxyvinyl)-alpha-D-glucosamine + NADPH + H(+). It functions in the pathway cell wall biogenesis; peptidoglycan biosynthesis. Functionally, cell wall formation. In Saccharopolyspora erythraea (strain ATCC 11635 / DSM 40517 / JCM 4748 / NBRC 13426 / NCIMB 8594 / NRRL 2338), this protein is UDP-N-acetylenolpyruvoylglucosamine reductase.